The chain runs to 473 residues: Adenosylhomocysteinase (473 aa).

Residues 58–62 (HMTIQ), aspartate 135, and glutamate 197 contribute to the substrate site. 198-200 (TTT) lines the NAD(+) pocket. 2 residues coordinate substrate: lysine 227 and aspartate 231. NAD(+)-binding positions include asparagine 232, valine 265, glutamate 284, asparagine 319, 340–342 (IGH), and asparagine 385. Residue histidine 342 coordinates substrate. Residue histidine 392 coordinates substrate. The NAD(+) site is built by lysine 467 and tyrosine 471.

This sequence belongs to the adenosylhomocysteinase family. In terms of assembly, homotetramer; dimer of dimers. The cofactor is NAD(+).

The protein localises to the cytoplasm. It catalyses the reaction S-adenosyl-L-homocysteine + H2O = L-homocysteine + adenosine. The protein operates within amino-acid biosynthesis; L-homocysteine biosynthesis; L-homocysteine from S-adenosyl-L-homocysteine: step 1/1. Functionally, may play a key role in the regulation of the intracellular concentration of adenosylhomocysteine, which is a strong inhibitor of SAM-dependent methyltransferases. Catalyzes the hydrolysis of S-adenosyl-L-homocysteine into L-homocysteine and adenosine. This Bradyrhizobium elkanii protein is Adenosylhomocysteinase.